The sequence spans 399 residues: Lymphoid enhancer-binding factor 1 (399 aa).

The segment covering 1–14 (MPQLSGGGGGGGGD) has biased composition (gly residues). The tract at residues 1–62 (MPQLSGGGGG…IKSSLVNESE (62 aa)) is CTNNB1-binding. A disordered region spans residues 1 to 104 (MPQLSGGGGG…KHPDGGLYNK (104 aa)). Composition is skewed to basic and acidic residues over residues 24-45 (IPFK…SHPE) and 82-98 (PYHD…KHPD). Residue Lys27 forms a Glycyl lysine isopeptide (Lys-Gly) (interchain with G-Cter in SUMO) linkage. At Ser132 the chain carries Phosphoserine. A Phosphothreonine; by NLK modification is found at Thr155. A Phosphoserine; by NLK modification is found at Ser166. Disordered regions lie at residues 166–192 (SPGS…PAPD) and 268–298 (VKQE…KRPH). Lys269 is covalently cross-linked (Glycyl lysine isopeptide (Lys-Gly) (interchain with G-Cter in SUMO)). Residues 269 to 296 (KQEHPHTDSDLMHVKPQHEQRKEQEPKR) are compositionally biased toward basic and acidic residues. Residues 299 to 367 (IKKPLNAFML…LHMQLYPGWS (69 aa)) constitute a DNA-binding region (HMG box). A disordered region spans residues 369-399 (RDNYGKKKKRKREKLQESASGTGPRMTAAYI).

It belongs to the TCF/LEF family. Binds the armadillo repeat of CTNNB1 and forms a stable complex. Interacts with EP300, TLE1 and PIASG. Binds ALYREF/THOC4, MDFI and MDFIC. Interacts with NLK. Interacts with DAZAP2. In terms of processing, phosphorylated at Thr-155 and/or Ser-166 by NLK. Phosphorylation by NLK at these sites represses LEF1-mediated transcriptional activation of target genes of the canonical Wnt signaling pathway. In terms of tissue distribution, detected in thymus. Not detected in normal colon, but highly expressed in colon cancer biopsies and colon cancer cell lines. Expressed in several pancreatic tumors and weakly expressed in normal pancreatic tissue. Isoforms 1 and 5 are detected in several pancreatic cell lines.

The protein localises to the nucleus. In terms of biological role, transcription factor that binds DNA in a sequence-specific manner. Participates in the Wnt signaling pathway. Activates transcription of target genes in the presence of CTNNB1 and EP300. PIAG antagonizes both Wnt-dependent and Wnt-independent activation by LEF1. TLE1, TLE2, TLE3 and TLE4 repress transactivation mediated by LEF1 and CTNNB1. Regulates T-cell receptor alpha enhancer function. Required for IL17A expressing gamma-delta T-cell maturation and development, via binding to regulator loci of BLK to modulate expression. Acts as a positive regulator of odontoblast differentiation during mesenchymal tooth germ formation, expression is repressed during the bell stage by MSX1-mediated inhibition of CTNNB1 signaling. May play a role in hair cell differentiation and follicle morphogenesis. Transcriptionally activates MYC and CCND1 expression and enhances proliferation of pancreatic tumor cells. Functionally, lacks the CTNNB1 interaction domain and may therefore be an antagonist for Wnt signaling. Its function is as follows. Transcriptionally activates the fibronectin promoter, binds to and represses transcription from the E-cadherin promoter in a CTNNB1-independent manner, and is involved in reducing cellular aggregation and increasing cell migration of pancreatic cancer cells. This is Lymphoid enhancer-binding factor 1 from Homo sapiens (Human).